The sequence spans 235 residues: MICOS complex subunit MIC25 (235 aa).

A lipid anchor (N-myristoyl glycine) is attached at Gly2. Ser13 and Ser31 each carry phosphoserine. Disordered regions lie at residues 31 to 90 and 106 to 132; these read SENV…VKRY and KRER…HEEQ. Residues 129–176 are a coiled coil; the sequence is HEEQKSVRLARELESREAELRRRDTFYKEQLERIERKNAEMYKLSSEQ. In terms of domain architecture, CHCH spans 194-235; sequence EPVCSGLQAQILHCYRDRPHEVLLCSDLVKAYQRCVSAAHKG. Short sequence motifs (cx9C motif) lie at residues 197-207 and 218-228; these read CSGLQAQILHC and CSDLVKAYQRC. 2 disulfide bridges follow: Cys197-Cys228 and Cys207-Cys218.

It belongs to the MICOS complex subunit Mic19 family. Metazoan Mic25 subfamily. As to quaternary structure, component of the mitochondrial contact site and cristae organizing system (MICOS) complex, composed of at least MICOS10/MIC10, CHCHD3/MIC19, CHCHD6/MIC25, APOOL/MIC27, IMMT/MIC60, APOO/MIC23/MIC26 and MICOS13/MIC13. This complex was also known under the names MINOS or MitOS complex. The MICOS complex associates with mitochondrial outer membrane proteins SAMM50, MTX1 and MTX2 (together described as components of the mitochondrial outer membrane sorting assembly machinery (SAM) complex) and DNAJC11, mitochondrial inner membrane protein TMEM11 and with HSPA9. The MICOS and SAM complexes together with DNAJC11 are part of a large protein complex spanning both membranes termed the mitochondrial intermembrane space bridging (MIB) complex. Interacts with DISC1. Interacts with DISC1. Interacts with IMMT/MIC60. (Microbial infection) Interacts with human cytomegalovirus protein UL37 isoform vMIA; this interaction rewires mitochondria by engaging the conserved MICOS complex.

It localises to the mitochondrion inner membrane. It is found in the mitochondrion. Functionally, component of the MICOS complex, a large protein complex of the mitochondrial inner membrane that plays crucial roles in the maintenance of crista junctions, inner membrane architecture, and formation of contact sites to the outer membrane. The polypeptide is MICOS complex subunit MIC25 (CHCHD6) (Homo sapiens (Human)).